Reading from the N-terminus, the 63-residue chain is Conotoxin Tx-D0111 (63 aa).

An N-terminal signal peptide occupies residues 1–19; sequence MRCLPVFVILLLLIASTPS. A propeptide spanning residues 20-47 is cleaved from the precursor; the sequence is DTVPLKTKDDMPQASFHGNARRTLQMLS.

The protein belongs to the conotoxin T superfamily. In terms of processing, contains 2 disulfide bonds that can be either 'C1-C3, C2-C4' or 'C1-C4, C2-C3', since these disulfide connectivities have been observed for conotoxins with cysteine framework V (for examples, see AC P0DQQ7 and AC P81755). In terms of tissue distribution, expressed by the venom duct.

The protein localises to the secreted. The sequence is that of Conotoxin Tx-D0111 from Conus textile (Cloth-of-gold cone).